Here is an 810-residue protein sequence, read N- to C-terminus: Lon protease (810 aa).

The region spanning 16-209 (YPVPPLRDIV…RVYAFMEGEI (194 aa)) is the Lon N-terminal domain. ATP is bound at residue 361–368 (GPPGVGKT). In terms of domain architecture, Lon proteolytic spans 598–779 (EDLVGVTTGL…DDVLKHALVR (182 aa)). Catalysis depends on residues Ser685 and Lys728.

Belongs to the peptidase S16 family. In terms of assembly, homohexamer. Organized in a ring with a central cavity.

The protein resides in the cytoplasm. It carries out the reaction Hydrolysis of proteins in presence of ATP.. Its function is as follows. ATP-dependent serine protease that mediates the selective degradation of mutant and abnormal proteins as well as certain short-lived regulatory proteins. Required for cellular homeostasis and for survival from DNA damage and developmental changes induced by stress. Degrades polypeptides processively to yield small peptide fragments that are 5 to 10 amino acids long. Binds to DNA in a double-stranded, site-specific manner. Involved in iron uptake. The protein is Lon protease of Azospirillum brasilense.